The following is a 303-amino-acid chain: Sushi domain-containing protein 6 (303 aa).

A signal peptide spans 1 to 39 (MCHGRIAPKSTSVFAVASVGHGVFLPLVILCTLLGDGLA). Positions 40–104 (SVCPLPPEPE…KPAMEISCRL (65 aa)) constitute a Sushi domain. Over 40 to 120 (SVCPLPPEPE…HTSLGVPTLS (81 aa)) the chain is Extracellular. 2 cysteine pairs are disulfide-bonded: cysteine 42-cysteine 89 and cysteine 74-cysteine 102. A helical membrane pass occupies residues 121–141 (IVASTASSVALILLLVVLFVL). At 142–303 (LQPKLKSFHH…TDDIPLLKEA (162 aa)) the chain is on the cytoplasmic side. Disordered stretches follow at residues 199–237 (VLSE…GQSG) and 263–282 (GSGN…NSDI).

The protein localises to the membrane. Functionally, may play a role in growth-suppressive activity and cell death. May be involved in the production of chemokine molecules in umbilical vein endothelial cells (HUVECs) cultured in THP1 monocyte LPS-induced medium. Plays a role in preventing tumor onset. The protein is Sushi domain-containing protein 6 of Homo sapiens (Human).